Here is a 552-residue protein sequence, read N- to C-terminus: MPSGRLQQQFIRLWQCCDGKTQDTTLNELADLLNCSRRHMRTLLNTMQARGWLTWEAEVGRGKRSRLTFLYTGLALQQQRAEDLLEQDRIDQLVQLVGDKSAVRQMLISHLGRSFRQGRHILRVLYYRPMHNLLPGTALRRSETHIARQIFSSLTRVNEENGELEADIAHHWQQISPLLWRFYLRPGIHFHHGRELEMEDVISSLTRINTLPLYSHITKIDSPTAWTLDIHLSQPDRWLPWLLGQVPAMILPRKWETLANFASHPIGTGPYAVRRNTPNQLKILAFDDYFGYRALIDEVNVWVLPDISEEPACGLMLEGPIQGGEKAIESRLEEGCYYLLFDARTPRGAHPQVREWVSHVLSPTNLLYHADEPLQQLWFPAYGLLPRWHHARPGPGEKPAGLETLTLTFYREHIEHRVIARIMSALLAEHQVHLHIQEIDYDQWHAGEIESDIWLNSANFTLPLDFSLFAHLCEVPLLQNCIPRDWQGDAAQWRAGEMNLANWCQQLLANKAIVPLIHHWLIIQGQRSMRGLRMNTLGWFDFKSAWFAPPDP.

The 116-residue stretch at 1 to 116 folds into the HTH marR-type domain; sequence MPSGRLQQQF…LISHLGRSFR (116 aa). The segment at residues 26 to 49 is a DNA-binding region (H-T-H motif); that stretch reads LNELADLLNCSRRHMRTLLNTMQA. A solute-binding region spans residues 163-493; sequence ELEADIAHHW…RDWQGDAAQW (331 aa).

Activates the small RNA gene sgrS under glucose-phosphate stress conditions as well as yfdZ. Represses its own transcription under both stress and non-stress conditions. Might act as a sensor of the intracellular accumulation of phosphoglucose by binding these molecules in its C-terminal solute-binding domain. In Salmonella typhimurium (strain LT2 / SGSC1412 / ATCC 700720), this protein is HTH-type transcriptional regulator SgrR.